Consider the following 223-residue polypeptide: Germin-like protein subfamily 1 member 10 (223 aa).

The first 24 residues, 1-24 (MAMKSLSFLAALSLLALTLPLTIA), serve as a signal peptide directing secretion. Cysteines 34 and 51 form a disulfide. The N-linked (GlcNAc...) asparagine glycan is linked to asparagine 38. Residues 65–215 (PGLQTARPIT…AFQVDPRVVM (151 aa)) enclose the Cupin type-1 domain. Positions 113, 115, 120, and 161 each coordinate Mn(2+).

It belongs to the germin family. In terms of assembly, oligomer (believed to be a pentamer but probably hexamer).

It localises to the secreted. The protein resides in the extracellular space. The protein localises to the apoplast. Functionally, may play a role in plant defense. Probably has no oxalate oxidase activity even if the active site is conserved. The protein is Germin-like protein subfamily 1 member 10 of Arabidopsis thaliana (Mouse-ear cress).